A 272-amino-acid chain; its full sequence is MAIPAALPPLPFNPTRVRSYMLRLPLFTRIVLLVILAFWLLELQTIWSVVQWGSLTPNEIGIGSMYRLNTYPFIHVGFFHAFVNLLALTPLLERFEAEHGTLTAVALFIGPLSTFPAGIYILVEKFILRSNTAVVGASVWIFLLLGSEAIKTFKSNPYFSLGTTKIPTWTSPLFACALVSIFVPNTSFLGHLSAIIIGYLLGLGYLKVFVPPEKILRWIEGKLNLLGRLPHYVSVDQKTYGRYGVLPTATAAVGGERPTPLSYLGTNQRLGP.

5 helical membrane-spanning segments follow: residues 30 to 50, 72 to 92, 103 to 123, 133 to 153, and 164 to 184; these read IVLLVILAFWLLELQTIWSVV, PFIHVGFFHAFVNLLALTPLL, TAVALFIGPLSTFPAGIYILV, AVVGASVWIFLLLGSEAIKTF, and TKIPTWTSPLFACALVSIFVP. Residue S138 is the Nucleophile of the active site. The N-linked (GlcNAc...) asparagine glycan is linked to N185. The helical transmembrane segment at 186 to 206 threads the bilayer; that stretch reads TSFLGHLSAIIIGYLLGLGYL. Residue H191 is part of the active site.

This sequence belongs to the peptidase S54 family.

Its subcellular location is the membrane. The enzyme catalyses Cleaves type-1 transmembrane domains using a catalytic dyad composed of serine and histidine that are contributed by different transmembrane domains.. Its function is as follows. Rhomboid protease that catalyzes intramembrane proteolysis. Required for transcription factor srbA activation by mediating its release from the membrane and thereby regulating its activity under hypoxic conditions. Essential for iron homeostasis and resistance to azoles such as voriconazole. Required for virulence in murine models of invasive pulmonary aspergillosis (IPA). In Aspergillus fumigatus (strain CBS 144.89 / FGSC A1163 / CEA10) (Neosartorya fumigata), this protein is Rhomboid-type serine protease B.